Reading from the N-terminus, the 390-residue chain is 3-ketoacyl-CoA thiolase (390 aa).

Residue C95 is the Acyl-thioester intermediate of the active site. Residues H346 and C376 each act as proton acceptor in the active site.

It belongs to the thiolase-like superfamily. Thiolase family. Heterotetramer of two alpha chains (FadB) and two beta chains (FadA).

The protein localises to the cytoplasm. It catalyses the reaction an acyl-CoA + acetyl-CoA = a 3-oxoacyl-CoA + CoA. Its pathway is lipid metabolism; fatty acid beta-oxidation. Its function is as follows. Catalyzes the final step of fatty acid oxidation in which acetyl-CoA is released and the CoA ester of a fatty acid two carbons shorter is formed. The chain is 3-ketoacyl-CoA thiolase from Psychrobacter sp. (strain PRwf-1).